Consider the following 353-residue polypeptide: Ribosomal RNA small subunit methyltransferase H (353 aa).

Residues 49–51 (GGH), aspartate 68, phenylalanine 95, aspartate 126, and glutamine 133 each bind S-adenosyl-L-methionine.

Belongs to the methyltransferase superfamily. RsmH family.

Its subcellular location is the cytoplasm. It catalyses the reaction cytidine(1402) in 16S rRNA + S-adenosyl-L-methionine = N(4)-methylcytidine(1402) in 16S rRNA + S-adenosyl-L-homocysteine + H(+). Functionally, specifically methylates the N4 position of cytidine in position 1402 (C1402) of 16S rRNA. This Corynebacterium urealyticum (strain ATCC 43042 / DSM 7109) protein is Ribosomal RNA small subunit methyltransferase H.